We begin with the raw amino-acid sequence, 86 residues long: Large ribosomal subunit protein bL31 (86 aa).

The interval 64–86 is disordered; that stretch reads KYGMGSANSSESKDQKEEKDSKK. The segment covering 74–86 has biased composition (basic and acidic residues); it reads ESKDQKEEKDSKK.

The protein belongs to the bacterial ribosomal protein bL31 family. Type A subfamily. As to quaternary structure, part of the 50S ribosomal subunit.

Its function is as follows. Binds the 23S rRNA. In Prochlorococcus marinus (strain MIT 9301), this protein is Large ribosomal subunit protein bL31.